The chain runs to 359 residues: Replication-associated protein (359 aa).

The region spanning 8–116 is the CRESS-DNA virus Rep endonuclease domain; that stretch reads QINAKHYFLT…DGDVLEWGTF (109 aa). Positions 15–18 match the RCR-1 motif; that stretch reads FLTF. Residues glutamate 49, histidine 57, and histidine 59 each contribute to the a divalent metal cation site. The short motif at 57-59 is the RCR-2 element; the sequence is HLH. Tyrosine 103 functions as the For DNA cleavage activity in the catalytic mechanism. The RCR-3 motif lies at 103-106; the sequence is YIDK. A divalent metal cation is bound at residue aspartate 107. The interval 143-153 is binding to RBR1; that stretch reads KSEALDVIKEL. The tract at residues 156–176 is oligomerization; sequence RDYILHFHNINSNLNMVFQVP. 221 to 228 contributes to the ATP binding site; that stretch reads GDSRTGKT.

This sequence belongs to the geminiviridae Rep protein family. As to quaternary structure, homooligomer. Interacts with the replication enhancer protein (REn). Interacts with host retinoblastoma-related protein 1 (RBR1), and may thereby induce the transcription of host replicative enzymes even if the cell is not dividing anymore. Interacts with host PCNA. Interacts with host SCE1 protein. Mg(2+) is required as a cofactor. It depends on Mn(2+) as a cofactor.

Its subcellular location is the host nucleus. In terms of biological role, essential for the replication of viral ssDNA. The closed circular ssDNA genome is first converted to a superhelical dsDNA. Rep binds a specific region at the genome origin of replication. It introduces an endonucleolytic nick within the conserved sequence 5'-TAATATTAC-3' in the intergenic region of the genome present in all geminiviruses, thereby initiating the rolling circle replication (RCR). Following cleavage, binds covalently to the 5'-phosphate of DNA as a tyrosyl ester. The cleavage gives rise to a free 3'-OH that serves as a primer for the cellular DNA polymerase. The polymerase synthesizes the (+) strand DNA by rolling circle mechanism. After one round of replication, a Rep-catalyzed nucleotidyl transfer reaction releases a circular single-stranded virus genome, thereby terminating the replication. Displays origin-specific DNA cleavage, nucleotidyl transferase, ATPase and helicase activities. The sequence is that of Replication-associated protein from Solanum lycopersicum (Tomato).